A 293-amino-acid chain; its full sequence is Peptidoglycan deacetylase (293 aa).

Zn(2+) is bound by residues Asp14, His86, and His90. The NodB homology domain maps to 29–276 (PDDISRGLFA…INKHEGVRWV (248 aa)).

Belongs to the polysaccharide deacetylase family. Homotetramer.

It carries out the reaction Deacetylation of xylans and xylo-oligosaccharides.. In terms of biological role, catalyzes the N-deacetylation of peptidoglycan (PG), an important mechanism that appears to confer lysozyme resistance and to mitigate host immune detection; this likely contributes to pathogen persistence in the host. The exact nature of the residue in PG that is deacetylated has not been determined. Is also able to catalyze the deacetylation of acetylated xylan, and, to a lesser extent, that of chitin and chitosan. Therefore, this enzyme might play a role during infection, considering that xylan-containing carbohydrate structures are among those commonly consumed by humans. In Helicobacter pylori (strain ATCC 700392 / 26695) (Campylobacter pylori), this protein is Peptidoglycan deacetylase (pgdA).